We begin with the raw amino-acid sequence, 283 residues long: Bifunctional protein FolD (283 aa).

Residues 164–166 (GSS), isoleucine 189, and isoleucine 230 each bind NADP(+).

The protein belongs to the tetrahydrofolate dehydrogenase/cyclohydrolase family. Homodimer.

The enzyme catalyses (6R)-5,10-methylene-5,6,7,8-tetrahydrofolate + NADP(+) = (6R)-5,10-methenyltetrahydrofolate + NADPH. The catalysed reaction is (6R)-5,10-methenyltetrahydrofolate + H2O = (6R)-10-formyltetrahydrofolate + H(+). Its pathway is one-carbon metabolism; tetrahydrofolate interconversion. In terms of biological role, catalyzes the oxidation of 5,10-methylenetetrahydrofolate to 5,10-methenyltetrahydrofolate and then the hydrolysis of 5,10-methenyltetrahydrofolate to 10-formyltetrahydrofolate. The polypeptide is Bifunctional protein FolD (Fusobacterium nucleatum subsp. nucleatum (strain ATCC 25586 / DSM 15643 / BCRC 10681 / CIP 101130 / JCM 8532 / KCTC 2640 / LMG 13131 / VPI 4355)).